We begin with the raw amino-acid sequence, 172 residues long: Large ribosomal subunit protein uL10 (172 aa).

This sequence belongs to the universal ribosomal protein uL10 family. In terms of assembly, part of the ribosomal stalk of the 50S ribosomal subunit. The N-terminus interacts with L11 and the large rRNA to form the base of the stalk. The C-terminus forms an elongated spine to which L12 dimers bind in a sequential fashion forming a multimeric L10(L12)X complex.

In terms of biological role, forms part of the ribosomal stalk, playing a central role in the interaction of the ribosome with GTP-bound translation factors. The chain is Large ribosomal subunit protein uL10 from Chlorobium luteolum (strain DSM 273 / BCRC 81028 / 2530) (Pelodictyon luteolum).